Reading from the N-terminus, the 665-residue chain is Chaperone protein dnaK1 (665 aa).

Thr198 bears the Phosphothreonine; by autocatalysis mark. A disordered region spans residues 634–665 (DDPWDNQMNSNSRNSRYGNSRDDDPWDNDYFL). Positions 642–651 (NSNSRNSRYG) are enriched in low complexity.

This sequence belongs to the heat shock protein 70 family.

Functionally, acts as a chaperone. The chain is Chaperone protein dnaK1 (dnaK1) from Prochlorococcus marinus subsp. pastoris (strain CCMP1986 / NIES-2087 / MED4).